The chain runs to 475 residues: Membrane-bound lytic murein transglycosylase F (475 aa).

Residues 1–30 (MKKLKINYLFIGILTLLLAAALWPSIPWFG) form the signal peptide. A non-LT domain region spans residues 31–269 (KTENHIAAIQ…RIEEKYLGHG (239 aa)). The interval 270–475 (DDFDYVDTRS…MKLAQDYPAV (206 aa)) is LT domain. Glu314 is an active-site residue.

The protein in the N-terminal section; belongs to the bacterial solute-binding protein 3 family. This sequence in the C-terminal section; belongs to the transglycosylase Slt family.

The protein resides in the cell outer membrane. The enzyme catalyses Exolytic cleavage of the (1-&gt;4)-beta-glycosidic linkage between N-acetylmuramic acid (MurNAc) and N-acetylglucosamine (GlcNAc) residues in peptidoglycan, from either the reducing or the non-reducing ends of the peptidoglycan chains, with concomitant formation of a 1,6-anhydrobond in the MurNAc residue.. Functionally, murein-degrading enzyme that degrades murein glycan strands and insoluble, high-molecular weight murein sacculi, with the concomitant formation of a 1,6-anhydromuramoyl product. Lytic transglycosylases (LTs) play an integral role in the metabolism of the peptidoglycan (PG) sacculus. Their lytic action creates space within the PG sacculus to allow for its expansion as well as for the insertion of various structures such as secretion systems and flagella. This chain is Membrane-bound lytic murein transglycosylase F, found in Salmonella typhi.